A 557-amino-acid polypeptide reads, in one-letter code: D-arabinono-1,4-lactone oxidase (557 aa).

Residues 25-209 form the FAD-binding PCMH-type domain; sequence FLCKPQAIFQ…THVTLRTCPK (185 aa). FAD is bound by residues 58–61, 62–63, 144–148, I199, and 543–546; these read VGSG, HS, ISTGT, and LSGK. Position 62 is a pros-8alpha-FAD histidine (H62).

The protein belongs to the oxygen-dependent FAD-linked oxidoreductase family. Requires FAD as cofactor.

It carries out the reaction D-arabinono-1,4-lactone + O2 = dehydro-D-arabinono-1,4-lactone + H2O2 + H(+). The catalysed reaction is L-galactono-1,4-lactone + O2 = L-ascorbate + H2O2 + H(+). The enzyme catalyses L-gulono-1,4-lactone + O2 = L-ascorbate + H2O2 + H(+). It catalyses the reaction L-xylono-1,4-lactone + O2 = dehydro-L-arabinono-1,4-lactone + H2O2 + H(+). The protein operates within cofactor biosynthesis; D-erythroascorbate biosynthesis; dehydro-D-arabinono-1,4-lactone from D-arabinose: step 2/2. In terms of biological role, D-arabinono-1,4-lactone oxidase that catalyzes the final step of biosynthesis of D-erythroascorbic acid, an important antioxidant and one of the virulence factors enhancing the pathogenicity. Is also able to oxidize L-galactono-1,4-lactone, L-xylono-1,4-lactone and L-gulono-1,4-lactone. In Candida albicans (strain SC5314 / ATCC MYA-2876) (Yeast), this protein is D-arabinono-1,4-lactone oxidase.